The primary structure comprises 246 residues: Large ribosomal subunit protein uL3 (246 aa).

Q151 carries the N5-methylglutamine modification.

This sequence belongs to the universal ribosomal protein uL3 family. As to quaternary structure, part of the 50S ribosomal subunit. Forms a cluster with proteins L14 and L19. Post-translationally, methylated by PrmB.

In terms of biological role, one of the primary rRNA binding proteins, it binds directly near the 3'-end of the 23S rRNA, where it nucleates assembly of the 50S subunit. The sequence is that of Large ribosomal subunit protein uL3 from Bartonella bacilliformis (strain ATCC 35685 / KC583 / Herrer 020/F12,63).